The primary structure comprises 2611 residues: Highly reducing polyketide synthase ATEG_07659 (2611 aa).

One can recognise a Ketosynthase family 3 (KS3) domain in the interval 10–409 (SEPIAIIGLS…GTNSHVIVEG (400 aa)). Catalysis depends on for beta-ketoacyl synthase activity residues Cys-157, His-292, and His-330. Residues 537–844 (MVFTGQGAQW…VRFVEAFTDM (308 aa)) form a malonyl-CoA:ACP transacylase (MAT) domain region. The N-terminal hotdog fold stretch occupies residues 969–1109 (HDLLGVLVPG…GLITVQMAAD (141 aa)). The 324-residue stretch at 969-1292 (HDLLGVLVPG…CQSLGRSAPG (324 aa)) folds into the PKS/mFAS DH domain. Positions 970-1289 (DLLGVLVPGT…GLVCQSLGRS (320 aa)) are dehydratase (DH) domain. Residue His-1001 is the Proton acceptor; for dehydratase activity of the active site. Residues 1128–1292 (GYTRRIDPQD…CQSLGRSAPG (165 aa)) are C-terminal hotdog fold. Asp-1199 acts as the Proton donor; for dehydratase activity in catalysis. The interval 1469-1602 (FGQLKSLLAA…GATLLLMETT (134 aa)) is methyltransferase (CMet) domain. The enoyl reductase (ER) domain stretch occupies residues 1898 to 2213 (GLLDTLAFGD…TGKHLGKLVL (316 aa)). Positions 2236-2416 (ASYLLVGGVG…AVSLDMGVIK (181 aa)) are ketoreductase (KR) domain. Low complexity predominate over residues 2499-2509 (SRAQAQQAGGD). The disordered stretch occupies residues 2499-2520 (SRAQAQQAGGDSDSEPLSAKLR). In terms of domain architecture, Carrier spans 2527–2604 (AAARCVGDAI…ALALDVVAKS (78 aa)). An O-(pantetheine 4'-phosphoryl)serine modification is found at Ser-2564.

Its pathway is secondary metabolite biosynthesis. Functionally, highly reducing polyketide synthase; part of the cluster B that mediates the biosynthesis of azasperpyranones, members of the azaphilone family that exhibit anti-cancer activities. Azasperpyranones are synthesized by 2 clusters, A and B. Cluster A is responsible for the production of the polyhydric phenol moiety while the azaphilonoid scaffold is produced by the cluster B. The non-reducing polyketide synthase ATEG_03629 produces 5-methyl orsellinic acid, which is then reduced to 5-methyl orsellinic aldehyde by the NRPS-like protein ATEG_03630. 5-methyl orsellinic aldehyde is then first hydroxylated by the FAD-dependent monooxygenase ATEG_03635 and subsequently hydroxylated by the cytochrome P450 monooxygenase ATEG_03631 to produce the unstable polyhydric phenol precursor of azasperpyranones. On the other hand, the polyketide synthase ATEG_07659 is responsible for producing the 3,5-dimethyloctadienone moiety from acetyl-CoA, three malonyl-CoA, and two S-adenosyl methionines (SAM). The 3,5-dimethyloctadienone moiety is then loaded onto the SAT domain of ATEG_07661 and extended with four malonyl-CoA and one SAM, which leads to the formation of 2,4-dihydroxy-6-(5,7-dimethyl-2-oxo-trans-3-trans-5-nonadienyl)-3-methylbenzaldehyde (compound 8) after reductive release and aldol condensation. The FAD-dependent monooxygenase ATEG_07662 is the next enzyme in the biosynthesis sequence and hydroxylates the side chain at the benzylic position of compound 8. In Aspergillus nidulans, afoF, the ortholog of the FAD-dependent oxygenase ATEG_07660, is the key enzyme for the biosynthesis of asperfuranone by catalyzing the hydroxylation at C-8 of to prevent the formation of a six-membered ring hemiacetal intermediate and thus facilitating the formation of a five-membered ring to produce asperfuranone. In Aspergillus terreus, ATEG_07660 is probably not functional, which leads to the formation of the six-membered ring hemiacetal intermediate presperpyranone instead of asperfuranone. Finally, ATEG_03636 is involved in the condensation of the polyhydric phenol moiety produced by cluster A and the perasperpyranone precursor produced by cluster B, to yield azasperpyranone A. Further modifications of azasperpyranone A result in the production of derivatives, including azasperpyranone B to F. This Aspergillus terreus (strain NIH 2624 / FGSC A1156) protein is Highly reducing polyketide synthase ATEG_07659.